The following is a 181-amino-acid chain: Ribulose bisphosphate carboxylase small subunit, chloroplastic (181 aa).

A chloroplast-targeting transit peptide spans Met1–Ser54.

It belongs to the RuBisCO small chain family. As to quaternary structure, heterohexadecamer of 8 large and 8 small subunits.

The protein resides in the plastid. The protein localises to the chloroplast. RuBisCO catalyzes two reactions: the carboxylation of D-ribulose 1,5-bisphosphate, the primary event in carbon dioxide fixation, as well as the oxidative fragmentation of the pentose substrate. Both reactions occur simultaneously and in competition at the same active site. Although the small subunit is not catalytic it is essential for maximal activity. The polypeptide is Ribulose bisphosphate carboxylase small subunit, chloroplastic (Raphanus sativus (Radish)).